The following is a 952-amino-acid chain: Inner tegument protein (952 aa).

The interaction with large tegument protein stretch occupies residues 490 to 952 (WQLKPHTILQ…PPPTDPALTN (463 aa)).

Belongs to the herpesviridae inner tegument protein family. As to quaternary structure, interacts (via C-terminus) with the large tegument protein/LTP (via N-terminus).

The protein localises to the virion tegument. Its subcellular location is the host cytoplasm. It localises to the host nucleus. It is found in the host Golgi apparatus. The protein resides in the host trans-Golgi network. In terms of biological role, plays an essential role in cytoplasmic secondary envelopment during viral egress. Interacts with the capsid via the large tegument protein/LTP and participates in its transport to the host trans-Golgi network (TGN) where secondary envelopment occurs. Modulates tegumentation and capsid accumulation at the viral assembly complex. This is Inner tegument protein (63) from Connochaetes taurinus (Blue wildebeest).